Here is a 167-residue protein sequence, read N- to C-terminus: NAD(P)H-quinone oxidoreductase subunit I, chloroplastic (167 aa).

4Fe-4S ferredoxin-type domains lie at 55 to 84 and 95 to 124; these read GRIH…VDWK and LNYS…MTEE. 8 residues coordinate [4Fe-4S] cluster: Cys-64, Cys-67, Cys-70, Cys-74, Cys-104, Cys-107, Cys-110, and Cys-114.

It belongs to the complex I 23 kDa subunit family. NDH is composed of at least 16 different subunits, 5 of which are encoded in the nucleus. [4Fe-4S] cluster serves as cofactor.

The protein resides in the plastid. The protein localises to the chloroplast thylakoid membrane. The enzyme catalyses a plastoquinone + NADH + (n+1) H(+)(in) = a plastoquinol + NAD(+) + n H(+)(out). The catalysed reaction is a plastoquinone + NADPH + (n+1) H(+)(in) = a plastoquinol + NADP(+) + n H(+)(out). Functionally, NDH shuttles electrons from NAD(P)H:plastoquinone, via FMN and iron-sulfur (Fe-S) centers, to quinones in the photosynthetic chain and possibly in a chloroplast respiratory chain. The immediate electron acceptor for the enzyme in this species is believed to be plastoquinone. Couples the redox reaction to proton translocation, and thus conserves the redox energy in a proton gradient. The chain is NAD(P)H-quinone oxidoreductase subunit I, chloroplastic from Draba nemorosa (Woodland whitlowgrass).